A 218-amino-acid chain; its full sequence is MKIFLDTANLEEIKKGVEWGIVDGVTTNPTLISKEGAEFKQRVKEICDLVKGPVSAEVVSLDYEGMVREARELAQISEYVVIKIPMTPDGIKAVKTLSAEGIKTNVTLVFSPAQAILAAKAGATYVSPFVGRMDDLSNDGMRMLGEIVEIYNNYGFETEIIAASIRHPMHVVEAALMGVDIVTIPFAVLERLFKHPMTDLGIERFMEDWKKYLENLKK.

Residue lysine 83 is the Schiff-base intermediate with substrate of the active site.

It belongs to the transaldolase family. Type 3B subfamily.

The protein localises to the cytoplasm. It catalyses the reaction D-sedoheptulose 7-phosphate + D-glyceraldehyde 3-phosphate = D-erythrose 4-phosphate + beta-D-fructose 6-phosphate. It participates in carbohydrate degradation; pentose phosphate pathway; D-glyceraldehyde 3-phosphate and beta-D-fructose 6-phosphate from D-ribose 5-phosphate and D-xylulose 5-phosphate (non-oxidative stage): step 2/3. Its function is as follows. Transaldolase is important for the balance of metabolites in the pentose-phosphate pathway. The polypeptide is Probable transaldolase (Thermotoga sp. (strain RQ2)).